Here is a 105-residue protein sequence, read N- to C-terminus: Small ribosomal subunit protein uS10 (105 aa).

Belongs to the universal ribosomal protein uS10 family. Part of the 30S ribosomal subunit.

Functionally, involved in the binding of tRNA to the ribosomes. This is Small ribosomal subunit protein uS10 from Lawsonia intracellularis (strain PHE/MN1-00).